The primary structure comprises 407 residues: Bifunctional enzyme IspD/IspF (407 aa).

A 2-C-methyl-D-erythritol 4-phosphate cytidylyltransferase region spans residues 1 to 246 (MQPLAEATTI…RQDHVSFPDI (246 aa)). Residues 247–407 (RTGNGYDVHS…TVIYPGEVPE (161 aa)) form a 2-C-methyl-D-erythritol 2,4-cyclodiphosphate synthase region. Positions 253 and 255 each coordinate a divalent metal cation. 4-CDP-2-C-methyl-D-erythritol 2-phosphate-binding positions include 253–255 (DVH) and 279–280 (HS). His-287 is a binding site for a divalent metal cation. 4-CDP-2-C-methyl-D-erythritol 2-phosphate is bound by residues 301-303 (DIG), 377-380 (TTNE), Phe-384, and Arg-387.

In the N-terminal section; belongs to the IspD/TarI cytidylyltransferase family. IspD subfamily. It in the C-terminal section; belongs to the IspF family. Requires a divalent metal cation as cofactor.

The enzyme catalyses 2-C-methyl-D-erythritol 4-phosphate + CTP + H(+) = 4-CDP-2-C-methyl-D-erythritol + diphosphate. It catalyses the reaction 4-CDP-2-C-methyl-D-erythritol 2-phosphate = 2-C-methyl-D-erythritol 2,4-cyclic diphosphate + CMP. Its pathway is isoprenoid biosynthesis; isopentenyl diphosphate biosynthesis via DXP pathway; isopentenyl diphosphate from 1-deoxy-D-xylulose 5-phosphate: step 2/6. It participates in isoprenoid biosynthesis; isopentenyl diphosphate biosynthesis via DXP pathway; isopentenyl diphosphate from 1-deoxy-D-xylulose 5-phosphate: step 4/6. In terms of biological role, bifunctional enzyme that catalyzes the formation of 4-diphosphocytidyl-2-C-methyl-D-erythritol from CTP and 2-C-methyl-D-erythritol 4-phosphate (MEP) (IspD), and catalyzes the conversion of 4-diphosphocytidyl-2-C-methyl-D-erythritol 2-phosphate (CDP-ME2P) to 2-C-methyl-D-erythritol 2,4-cyclodiphosphate (ME-CPP) with a corresponding release of cytidine 5-monophosphate (CMP) (IspF). The sequence is that of Bifunctional enzyme IspD/IspF from Brucella anthropi (strain ATCC 49188 / DSM 6882 / CCUG 24695 / JCM 21032 / LMG 3331 / NBRC 15819 / NCTC 12168 / Alc 37) (Ochrobactrum anthropi).